The chain runs to 243 residues: Endochitinase (243 aa).

Cystine bridges form between Cys-23/Cys-85, Cys-97/Cys-105, and Cys-223/Cys-236. Glu-67 acts as the Proton donor in catalysis.

The protein resides in the vacuole. It carries out the reaction Random endo-hydrolysis of N-acetyl-beta-D-glucosaminide (1-&gt;4)-beta-linkages in chitin and chitodextrins.. Functionally, defense against chitin-containing fungal pathogens. Shows activity on chitin, tetra-N-acetylglucosamine and chitosan. The protein is Endochitinase of Carica papaya (Papaya).